Reading from the N-terminus, the 25-residue chain is Small ribosomal subunit protein eS32 (25 aa).

The tract at residues 1-25 (MREKWKKKRSRRLRRKRRKMRARSK) is disordered.

Belongs to the eukaryotic ribosomal protein eS32 family. In terms of assembly, component of the large ribosomal subunit.

This is Small ribosomal subunit protein eS32 (rpl41) from Agaricus bisporus (White button mushroom).